The sequence spans 327 residues: MILSIESSCDDTSLAVMEIDSKKLLFHKKISQEIEHSVYGGVVPELASRLHAKALPKILEETKEYFPNLKAVAVTNAPGLSVTLQEGVMMAKALSIALNIPLIGVNHLVGHIYSLFIEKEEIKPMMVLLVSGGHTKILNFNGIESVCEIATTMDDSFGESFDKVAKMLGLGYPGGPVIENLAKKGSDIVPLPLPLRNSPEIAFSYSGIKNAVRLAIESGKYKPEDIAASFQNKAIEHLTFMCKRAIKKHKPENFAIVGGASANLKLREEFEKLSQKFGFKLLYPEMKFTSDNAAMIARAAVEMYKKGMFLNYKDIKIIPRVDFDKCH.

Histidine 107 and histidine 111 together coordinate Fe cation. Residues 129–133 (LVSGG), aspartate 162, glycine 175, and asparagine 263 each bind substrate. Aspartate 291 serves as a coordination point for Fe cation.

Belongs to the KAE1 / TsaD family. Fe(2+) is required as a cofactor.

It localises to the cytoplasm. The enzyme catalyses L-threonylcarbamoyladenylate + adenosine(37) in tRNA = N(6)-L-threonylcarbamoyladenosine(37) in tRNA + AMP + H(+). Its function is as follows. Required for the formation of a threonylcarbamoyl group on adenosine at position 37 (t(6)A37) in tRNAs that read codons beginning with adenine. Is involved in the transfer of the threonylcarbamoyl moiety of threonylcarbamoyl-AMP (TC-AMP) to the N6 group of A37, together with TsaE and TsaB. TsaD likely plays a direct catalytic role in this reaction. This Nautilia profundicola (strain ATCC BAA-1463 / DSM 18972 / AmH) protein is tRNA N6-adenosine threonylcarbamoyltransferase.